A 197-amino-acid polypeptide reads, in one-letter code: ATP-dependent Clp protease proteolytic subunit 1 (197 aa).

S96 (nucleophile) is an active-site residue. Residue H121 is part of the active site.

This sequence belongs to the peptidase S14 family. As to quaternary structure, fourteen ClpP subunits assemble into 2 heptameric rings which stack back to back to give a disk-like structure with a central cavity, resembling the structure of eukaryotic proteasomes.

The protein localises to the cytoplasm. The enzyme catalyses Hydrolysis of proteins to small peptides in the presence of ATP and magnesium. alpha-casein is the usual test substrate. In the absence of ATP, only oligopeptides shorter than five residues are hydrolyzed (such as succinyl-Leu-Tyr-|-NHMec, and Leu-Tyr-Leu-|-Tyr-Trp, in which cleavage of the -Tyr-|-Leu- and -Tyr-|-Trp bonds also occurs).. Its function is as follows. Cleaves peptides in various proteins in a process that requires ATP hydrolysis. Has a chymotrypsin-like activity. Plays a major role in the degradation of misfolded proteins. This is ATP-dependent Clp protease proteolytic subunit 1 from Synechococcus sp. (strain ATCC 27144 / PCC 6301 / SAUG 1402/1) (Anacystis nidulans).